Here is an 858-residue protein sequence, read N- to C-terminus: Bifunctional uridylyltransferase/uridylyl-removing enzyme (858 aa).

The uridylyltransferase stretch occupies residues 1 to 324 (MSASVAEPPP…PATSGVTRVL (324 aa)). The uridylyl-removing stretch occupies residues 325 to 681 (SPGRFVEKQG…ARPSPVGDAL (357 aa)). Residues 443–565 (VDQHILMVLR…VGSERRLTAL (123 aa)) enclose the HD domain. 2 ACT domains span residues 682-761 (QVLV…PEPS) and 790-858 (ILSV…AIAV).

This sequence belongs to the GlnD family. The cofactor is Mg(2+).

It catalyses the reaction [protein-PII]-L-tyrosine + UTP = [protein-PII]-uridylyl-L-tyrosine + diphosphate. The catalysed reaction is [protein-PII]-uridylyl-L-tyrosine + H2O = [protein-PII]-L-tyrosine + UMP + H(+). Its activity is regulated as follows. Uridylyltransferase (UTase) activity is inhibited by glutamine, while glutamine activates uridylyl-removing (UR) activity. In terms of biological role, modifies, by uridylylation and deuridylylation, the PII regulatory proteins (GlnB and homologs), in response to the nitrogen status of the cell that GlnD senses through the glutamine level. Under low glutamine levels, catalyzes the conversion of the PII proteins and UTP to PII-UMP and PPi, while under higher glutamine levels, GlnD hydrolyzes PII-UMP to PII and UMP (deuridylylation). Thus, controls uridylylation state and activity of the PII proteins, and plays an important role in the regulation of nitrogen assimilation and metabolism. This is Bifunctional uridylyltransferase/uridylyl-removing enzyme from Burkholderia pseudomallei (strain K96243).